We begin with the raw amino-acid sequence, 491 residues long: Cytochrome P450 monooxygenase 521A1 (491 aa).

Residues 1-21 (MILLTLLYLIIFYIIIDFIKK) form a helical membrane-spanning segment. A heme-binding site is contributed by Cys438.

This sequence belongs to the cytochrome P450 family. The cofactor is heme.

The protein resides in the membrane. The catalysed reaction is discoidol + reduced [NADPH--hemoprotein reductase] + O2 = discodiene + acetone + oxidized [NADPH--hemoprotein reductase] + 2 H2O + H(+). The protein operates within sesquiterpene biosynthesis. Cytochrome P450 monooxygenase; part of the gene cluster that mediates the biosynthesis of the trisnorsesquiterpene discodiene which has a function during later stages of multicellular development, during the transition from fingers to Mexican hats. The terpene synthase tps8 converts its substrate farnesyl diphosphate (FDP) into the bicyclic sesquiterpene alcohol discoidol. The cytochrome P450 monooxygenase cyp521A1 then catalyzes the oxidative degradation of discoidol to form the trisnorsesquiterpene discodiene. The protein is Cytochrome P450 monooxygenase 521A1 (cyp521A1) of Dictyostelium discoideum (Social amoeba).